A 460-amino-acid polypeptide reads, in one-letter code: tRNA-2-methylthio-N(6)-dimethylallyladenosine synthase (460 aa).

An MTTase N-terminal domain is found at 10–126 (GSYWITTFGC…LEVLLNRVDS (117 aa)). Residues Cys19, Cys55, Cys89, Cys161, Cys165, and Cys168 each contribute to the [4Fe-4S] cluster site. The 238-residue stretch at 147–384 (RDSSICGWVN…NALVERCARE (238 aa)) folds into the Radical SAM core domain. The TRAM domain maps to 387–455 (ARYAGRTEEV…SFSLSGTPLP (69 aa)).

It belongs to the methylthiotransferase family. MiaB subfamily. As to quaternary structure, monomer. The cofactor is [4Fe-4S] cluster.

The protein resides in the cytoplasm. It carries out the reaction N(6)-dimethylallyladenosine(37) in tRNA + (sulfur carrier)-SH + AH2 + 2 S-adenosyl-L-methionine = 2-methylsulfanyl-N(6)-dimethylallyladenosine(37) in tRNA + (sulfur carrier)-H + 5'-deoxyadenosine + L-methionine + A + S-adenosyl-L-homocysteine + 2 H(+). In terms of biological role, catalyzes the methylthiolation of N6-(dimethylallyl)adenosine (i(6)A), leading to the formation of 2-methylthio-N6-(dimethylallyl)adenosine (ms(2)i(6)A) at position 37 in tRNAs that read codons beginning with uridine. The protein is tRNA-2-methylthio-N(6)-dimethylallyladenosine synthase of Parasynechococcus marenigrum (strain WH8102).